We begin with the raw amino-acid sequence, 479 residues long: Muscarinic acetylcholine receptor M4 (479 aa).

Over 1-30 (MANFTPVNGSSANQSVRLVTTAHNHLETVE) the chain is Extracellular. 2 N-linked (GlcNAc...) asparagine glycosylation sites follow: asparagine 8 and asparagine 13. A helical transmembrane segment spans residues 31 to 53 (MVFIATVTGSLSLVTVVGNILVM). Over 54-67 (LSIKVNRQLQTVNN) the chain is Cytoplasmic. Residues 68-88 (YFLFSLACADLIIGAFSMNLY) form a helical membrane-spanning segment. The Extracellular segment spans residues 89 to 105 (TLYIIKGYWPLGAVVCD). Cysteine 104 and cysteine 184 form a disulfide bridge. A helical transmembrane segment spans residues 106-127 (LWLALDYVVSNASVMNLLIISF). Over 128–147 (DRYFCVTKPLTYPARRTTKM) the chain is Cytoplasmic. A helical membrane pass occupies residues 148–170 (AGLMIAAAWVLSFVLWAPAILFW). Residues 171–192 (QFVVGKRTVPDNQCFIQFLSNP) lie on the Extracellular side of the membrane. The chain crosses the membrane as a helical span at residues 193-215 (AVTFGTAIAAFYLPVVIMTVLYI). The Cytoplasmic segment spans residues 216 to 401 (HISLASRSRV…AARERKVTRT (186 aa)). The tract at residues 271 to 334 (LEEAPPPALP…APTLQPRTLN (64 aa)) is disordered. Residues 274–285 (APPPALPPPPRP) show a composition bias toward pro residues. Over residues 293-303 (NESSSGSATQN) the composition is skewed to polar residues. Positions 310–333 (TELSTTEAATTPALPAPTLQPRTL) are enriched in low complexity. A helical membrane pass occupies residues 402–422 (IFAILLAFILTWTPYNVMVLV). Residues 423–436 (NTFCQSCIPERVWS) are Extracellular-facing. The chain crosses the membrane as a helical span at residues 437–456 (IGYWLCYVNSTINPACYALC). The Cytoplasmic portion of the chain corresponds to 457–479 (NATFKKTFRHLLLCQYRNIGTAR). Phosphothreonine occurs at positions 459, 463, and 477.

Belongs to the G-protein coupled receptor 1 family. Muscarinic acetylcholine receptor subfamily. CHRM4 sub-subfamily.

It localises to the cell membrane. The protein resides in the postsynaptic cell membrane. The muscarinic acetylcholine receptor mediates various cellular responses, including inhibition of adenylate cyclase, breakdown of phosphoinositides and modulation of potassium channels through the action of G proteins. Primary transducing effect is inhibition of adenylate cyclase. This chain is Muscarinic acetylcholine receptor M4 (Chrm4), found in Mus musculus (Mouse).